A 206-amino-acid polypeptide reads, in one-letter code: RILP-like protein 2 (206 aa).

The segment at 1–29 (MEEPPLREEEEEEEEDEAGPEGALGKSPL) is disordered. Acidic residues predominate over residues 8–19 (EEEEEEEEDEAG). The region spanning 19 to 108 (GPEGALGKSP…RREGSAAGPE (90 aa)) is the RH1 domain. Positions 67-159 (LEMLETLVNE…VQEELQCYKS (93 aa)) form a coiled coil. The RH2 domain occupies 125 to 197 (RPRFTLQELR…KEEKTIIRKL (73 aa)). Residues 161-189 (LIPPREGPGGRREKEALFPRGSNANSNKE) are disordered. Over residues 168-177 (PGGRREKEAL) the composition is skewed to basic and acidic residues.

The protein belongs to the RILPL family. Homodimer. Interacts with RAC1. Interacts (via N-terminus) with MYO5A, the interaction is required for its role in dendrite formation. Interacts with RAB8A; interaction is dependent on the phosphorylation of RAB8A on 'Thr-72'. Interacts with RAB10 and RAB12; interaction is dependent on the phosphorylation of 'Thr-73' on RAB10 and 'Ser-105' on RAB12.

The protein localises to the cytoplasm. Its subcellular location is the cytosol. It localises to the cytoskeleton. The protein resides in the microtubule organizing center. It is found in the centrosome. The protein localises to the cell projection. Its subcellular location is the cilium. In terms of biological role, involved in cell shape and neuronal morphogenesis, positively regulating the establishment and maintenance of dendritic spines. Plays a role in cellular protein transport, including protein transport away from primary cilia. May function via activation of RAC1 and PAK1. In Bos taurus (Bovine), this protein is RILP-like protein 2 (RILPL2).